A 798-amino-acid chain; its full sequence is Integrin beta-1 (798 aa).

The N-terminal stretch at 1 to 20 (MNLQLIFWIGLISSVCCVFG) is a signal peptide. At 21–728 (QADEDRCLKA…ETPECPTGPD (708 aa)) the chain is on the extracellular side. A PSI domain is found at 26-76 (RCLKANAKSCGECIQAGPNCGWCTNSTFLQEGMPTSARCDDLEALKKKGCH). 28 cysteine pairs are disulfide-bonded: Cys-27-Cys-45, Cys-35-Cys-464, Cys-38-Cys-64, Cys-48-Cys-75, Cys-207-Cys-213, Cys-261-Cys-301, Cys-401-Cys-415, Cys-435-Cys-462, Cys-466-Cys-486, Cys-477-Cys-489, Cys-491-Cys-500, Cys-502-Cys-533, Cys-516-Cys-531, Cys-525-Cys-536, Cys-538-Cys-553, Cys-555-Cys-576, Cys-560-Cys-574, Cys-568-Cys-579, Cys-581-Cys-590, Cys-592-Cys-615, Cys-599-Cys-613, Cys-607-Cys-618, Cys-620-Cys-630, Cys-633-Cys-636, Cys-640-Cys-691, Cys-646-Cys-665, Cys-649-Cys-661, and Cys-699-Cys-723. Over residues 75–91 (CHPNDTENPRGSKDIKK) the composition is skewed to basic and acidic residues. Residues 75 to 105 (CHPNDTENPRGSKDIKKNKNVTNRSKGTAEK) are disordered. Asn-94 and Asn-97 each carry an N-linked (GlcNAc...) asparagine glycan. Residues 140–378 (DYPIDLYYLM…QLIIDAYNSL (239 aa)) enclose the VWFA domain. 2 residues coordinate Mg(2+): Ser-152 and Ser-154. Residues Ser-154, Asp-157, Asp-158, and Glu-189 each coordinate Ca(2+). The CX3CL1-binding stretch occupies residues 207 to 213 (CTNEQNC). N-linked (GlcNAc...) asparagine glycosylation occurs at Asn-212. Asn-244, Asp-246, Pro-248, and Glu-249 together coordinate Ca(2+). Glu-249 is a binding site for Mg(2+). Asn-269 carries an N-linked (GlcNAc...) asparagine glycan. The CX3CL1-binding stretch occupies residues 295–314 (LPNDGQCHLKNDVYTMSHYY). Ala-362 contacts Ca(2+). The segment at 383 to 465 (ILENSKLPEG…IILQFICECE (83 aa)) is interaction with TMEM182. N-linked (GlcNAc...) asparagine glycans are attached at residues Asn-406 and Asn-417. I-EGF domains are found at residues 466 to 501 (CQGE…RHCE), 502 to 554 (CSTD…KFCE), 555 to 591 (CDNF…SACD), and 592 to 631 (CSLD…PTCE). The N-linked (GlcNAc...) asparagine glycan is linked to Asn-481. The N-linked (GlcNAc...) asparagine glycan is linked to Asn-520. N-linked (GlcNAc...) asparagine glycosylation occurs at Asn-584. Asn-669 carries an N-linked (GlcNAc...) asparagine glycan. The chain crosses the membrane as a helical span at residues 729–749 (IIPIVAGVVAGIVLIGLALLL). The Cytoplasmic portion of the chain corresponds to 750–798 (IWKLLMIIHDRREFAKFEKERMNAKWDTGENPIYKSAVTTVVNPKYEGK). The tract at residues 762 to 767 (EFAKFE) is signal for sorting from recycling endosomes; interaction with ACAP1. Thr-777 bears the Phosphothreonine mark. Tyr-783 carries the phosphotyrosine modification. A Phosphoserine modification is found at Ser-785. Positions 785 to 792 (SAVTTVVN) are interaction with ITGB1BP1. Thr-789 carries the phosphothreonine modification. N6-acetyllysine; alternate is present on Lys-794. Lys-794 participates in a covalent cross-link: Glycyl lysine isopeptide (Lys-Gly) (interchain with G-Cter in SUMO1); alternate.

It belongs to the integrin beta chain family. As to quaternary structure, interacts with seprase FAP (seprase); the interaction occurs at the cell surface of invadopodia membrane in a collagen-dependent manner. Heterodimer of an alpha and a beta subunit. Beta-1 associates with either alpha-1, alpha-2, alpha-3, alpha-4, alpha-5, alpha-6, alpha-7, alpha-8, alpha-9, alpha-10, alpha-11 or alpha-V. ITGA6:ITGB1 is found in a complex with CD9; interaction takes place in oocytes and is involved in sperm-egg fusion. Binds LGALS3BP and NMRK2, when associated with alpha-7, but not with alpha-5. Interacts with FLNA, FLNB, FLNC and RANBP9. Interacts with KRT1 in the presence of RACK1 and SRC. Interacts with JAML; integrin alpha-4/beta-1 may regulate leukocyte to endothelial cells adhesion by controlling JAML homodimerization. Interacts with RAB21. Interacts (via the cytoplasmic region) with RAB25 (via the hypervariable C-terminal region). Interacts with MYO10. Interacts with ITGB1BP1 (via C-terminal region); the interaction is a prerequisite for focal adhesion disassembly. Interacts with TLN1; the interaction is prevented by competitive binding of ITGB1BP1. Interacts with ACAP1; required for ITGB1 recycling. Interacts with ASAP3. Interacts with FERMT2; the interaction is inhibited in presence of ITGB1BP1. Interacts with DAB2. Interacts with FGR and HCK. Interacts with alpha-7A and alpha-7B in adult skeletal muscle. Interacts with alpha-7B in cardiomyocytes of adult heart. Interacts with EMP2; the interaction may be direct or indirect and ITGB1 has a heterodimer form. ITGA5:ITGB1 interacts with CCN3. ITGA4:ITGB1 is found in a ternary complex with CX3CR1 and CX3CL1. ITGA5:ITGB1 interacts with FBN1. ITGA5:ITGB1 acts as a receptor for fibronectin FN1 and mediates R-G-D-dependent cell adhesion to FN1. ITGA5:ITGB1 interacts with IL1B. Interacts with MDK. ITGA4:ITGB1 interacts with MDK; this interaction mediates MDK-induced osteoblast cells migration through PXN phosphorylation. ITGA6:ITGB1 interacts with MDK; this interaction mediates MDK-induced neurite-outgrowth. ITGA5:ITGB1 interacts with ACE2. Interacts with TMEM182 and LAMB1. Interacts with tensin TNS3; TNS3 also interacts with PEAK1, thus acting as an adapter molecule to bridge the association of PEAK1 with ITGB1. Interacts with tensin TNS4; the interaction displaces tensin TNS3 from the ITGB1 cytoplasmic tail and promotes ITGB1 stability. Integrin ITGA9:ITGB1 interacts with SPP1/OPN (via N-terminus). Integrin ITGA9:ITGB1 interacts with TNC/TNFN3 (via the 3rd Fibronectin type-III domain). Integrins ITGA4:ITGB1 and ITGA9:ITGB1 interact with SVEP1 (via Sushi domain 21); thereby inhibit Ca(2+) intracellular signaling and as a result repress vasocontraction. ITGA4:ITGB1 and ITGA5:ITGB1 interacts with SELP. Interacts with CD248. ITGA5:ITGB1 interacts with IGFBP1. ITGA4:ITGB1 interacts with BCAM. Interacts with ADGRG6.

The protein localises to the cell membrane. The protein resides in the cell projection. Its subcellular location is the invadopodium membrane. It is found in the ruffle membrane. It localises to the recycling endosome. The protein localises to the melanosome. The protein resides in the cell junction. Its subcellular location is the focal adhesion. It is found in the lamellipodium. It localises to the ruffle. In terms of biological role, integrins alpha-1/beta-1, alpha-2/beta-1, alpha-10/beta-1 and alpha-11/beta-1 are receptors for collagen. Integrins alpha-1/beta-1 and alpha-2/beta-2 recognize the proline-hydroxylated sequence G-F-P-G-E-R in collagen. Integrins alpha-2/beta-1, alpha-3/beta-1, alpha-4/beta-1, alpha-5/beta-1, alpha-8/beta-1, alpha-10/beta-1, alpha-11/beta-1 and alpha-V/beta-1 are receptors for fibronectin. Alpha-4/beta-1 recognizes one or more domains within the alternatively spliced CS-1 and CS-5 regions of fibronectin. Integrin alpha-5/beta-1 is a receptor for fibrinogen. Integrin alpha-1/beta-1, alpha-2/beta-1, alpha-6/beta-1 and alpha-7/beta-1 are receptors for lamimin. Integrin alpha-6/beta-1 (ITGA6:ITGB1) is present in oocytes and is involved in sperm-egg fusion. Integrin alpha-4/beta-1 is a receptor for VCAM1 and recognizes the sequence Q-I-D-S in VCAM1. Integrin alpha-9/beta-1 is a receptor for VCAM1, cytotactin and osteopontin. It recognizes the sequence A-E-I-D-G-I-E-L in cytotactin. Integrin alpha-3/beta-1 is a receptor for epiligrin, thrombospondin and CSPG4. Integrin alpha-3/beta-1 provides a docking site for FAP (seprase) at invadopodia plasma membranes in a collagen-dependent manner and hence may participate in the adhesion, formation of invadopodia and matrix degradation processes, promoting cell invasion. Alpha-3/beta-1 may mediate with LGALS3 the stimulation by CSPG4 of endothelial cells migration. Integrin alpha-V/beta-1 is a receptor for vitronectin. Beta-1 integrins recognize the sequence R-G-D in a wide array of ligands. When associated with alpha-7/beta-1 integrin, regulates cell adhesion and laminin matrix deposition. Involved in promoting endothelial cell motility and angiogenesis. Involved in osteoblast compaction through the fibronectin fibrillogenesis cell-mediated matrix assembly process and the formation of mineralized bone nodules. May be involved in up-regulation of the activity of kinases such as PKC via binding to KRT1. Together with KRT1 and RACK1, serves as a platform for SRC activation or inactivation. Plays a mechanistic adhesive role during telophase, required for the successful completion of cytokinesis. ITGA4:ITGB1 binds to fractalkine (CX3CL1) and may act as its coreceptor in CX3CR1-dependent fractalkine signaling. ITGA4:ITGB1 and ITGA5:ITGB1 bind to PLA2G2A via a site (site 2) which is distinct from the classical ligand-binding site (site 1) and this induces integrin conformational changes and enhanced ligand binding to site 1. ITGA5:ITGB1 acts as a receptor for fibrillin-1 (FBN1) and mediates R-G-D-dependent cell adhesion to FBN1. ITGA5:ITGB1 is a receptor for IL1B and binding is essential for IL1B signaling. ITGA5:ITGB3 is a receptor for soluble CD40LG and is required for CD40/CD40LG signaling. Plays an important role in myoblast differentiation and fusion during skeletal myogenesis. ITGA9:ITGB1 may play a crucial role in SVEP1/polydom-mediated myoblast cell adhesion. Integrins ITGA9:ITGB1 and ITGA4:ITGB1 repress PRKCA-mediated L-type voltage-gated channel Ca(2+) influx and ROCK-mediated calcium sensitivity in vascular smooth muscle cells via their interaction with SVEP1, thereby inhibit vasocontraction. The polypeptide is Integrin beta-1 (Camelus bactrianus (Bactrian camel)).